A 1509-amino-acid polypeptide reads, in one-letter code: MAAQRRRKGGEVESDYIKYLKYKNTGFQVSASDKTLAWWPTKDADRAFCHVEVTKDDGKNFTVRLENGEEKSQPKNEKNFLGVNPPKFDGVEDMGELGYLNEPAVLHNLKKRYDADLFHTYSGLFLVVVNPYKRLPVYTPEIIDIYRGRQRDKVAPHIFAISDAAYRAMLNTRQNQSMLITGESGAGKTENTKKVIQYLTAIAGRAEGGLLEQQLLEFNPILEAFGNAKTTKNNNSSRFGKFIELQFNAGGQITGANTFIYLLEKSRVTAQGAGERNFHIFYQILSKAMPEELKQKLKLTKPEDYFFLNQNACYTVDDMDDAKEFDHMLKAFDILNINEEERLAIFQTISAILHLGNLPFIDVNSETAGLKDEVELNIAAELLGVSAAGLKAGLLSPRIKAGNEWVTRALNKPKAMASRDALCKALFGRLFLWIVQKINRILSHKDKTALWIGVLDISGFEIFQHNSFEQLCINYTNEKLQQFFNHHMFTLEQQEYEREKIDWTFVDYGMDSQDCIDLIEKKPMGILPLLDEQTVFPDADDTSFTKKLFQTHENHRNFRRPRFDANNFKIVHYAGEVEYQTSAWLEKNRDPLEDDLSNLCKKSSVRFVTGLFDEDLMPSFKAAPAEEEKAAAGGSRNRSTGRGKGGAQFITVAFQYKEQLAHLMSMLSSTAPHFIRCIIPNLGKKPGVVSDQLVLDQLKCNGVLEGIRIARKGWPNRLKYDEFLKRYFLLKPGATPTSPSTKDAVKDLIEHLIAKEPTKVNKDEVRFGVTKIFFRSGQLAAIEELREQAISKMVVSIQAGARAFLARRMYDKMREQTVSAKILQRNIRAWLELKNWAWYQLYVKARPLISQRNFQKEIDDLKKQVKDLEKELAALKDANAKLDKEKQLAEEDADKLEKDLAALKLKILDLEGEKADLEEDNALLQKKVAGLEEELQEETSASNDILEQKRKLEAEKGELKASLEEEERNRKALQEAKTKVESERNELQDKYEDEAAAHDSLKKKEEDLSRELRETKDALADAENISETLRSKLKNTERGADDVRNELDDVTATKLQLEKTKKSLEEELAQTRAQLEEEKSGKEAASSKAKQLGQQLEDARSEVDSLKSKLSAAEKSLKTAKDQNRDLDEQLEDERTVRANVDKQKKALEAKLTELEDQVTALDGQKNAAAAQAKTLKTQVDETKRRLEEAEASAARLEKERKNALDEVAQLTADLDAERDSGAQQRRKLNTRISELQSELENAPKTGGASSEEVKRLEGELERLEEELLTAQEARAAAEKNLDKANLELEELRQEADDAARDNDKLVKDNRKLKADLDEARIQLEEEQDAKSHADSSSRRLLAEIEELKKRVAKETSDKQKAQDQKANYQRENESLKADRDSIERRNRDAERQVRDLRAQLDDALSRLDSEKRAKEKSVEANRELKKVVLDRERQSLESLSKFNSALESDKQILEDEIGDLHEKNKQLQAKIAQLQDEIDGTPSSRGGSTRGASARGASVRAGSARAEE.

One can recognise a Myosin N-terminal SH3-like domain in the interval 32-85; that stretch reads SDKTLAWWPTKDADRAFCHVEVTKDDGKNFTVRLENGEEKSQPKNEKNFLGVNP. The 699-residue stretch at 89–787 folds into the Myosin motor domain; that stretch reads DGVEDMGELG…QLAAIEELRE (699 aa). Lys133 carries the post-translational modification N6,N6,N6-trimethyllysine. 182-189 contacts ATP; that stretch reads GESGAGKT. The interval 623–643 is disordered; that stretch reads APAEEEKAAAGGSRNRSTGRG. Actin-binding stretches follow at residues 660–682 and 766–780; these read LAHL…IPNL and RFGV…GQLA. In terms of domain architecture, IQ spans 790 to 819; the sequence is ISKMVVSIQAGARAFLARRMYDKMREQTVS. Residues 848–1226 are alpha-helical tailpiece (S2); that stretch reads LISQRNFQKE…AERDSGAQQR (379 aa). Residues 848–1509 adopt a coiled-coil conformation; the sequence is LISQRNFQKE…VRAGSARAEE (662 aa). Composition is skewed to basic and acidic residues over residues 958-1019, 1034-1047, 1097-1107, 1115-1141, and 1179-1189; these read ELKA…KDAL, KNTE…RNEL, EDARSEVDSLK, KSLK…RANV, and QVDETKRRLEE. Disordered stretches follow at residues 958–1049, 1068–1141, 1170–1195, 1213–1259, 1352–1425, and 1474–1509; these read ELKA…ELDD, LAQT…RANV, AAQA…ASAA, ADLD…RLEG, VAKE…NREL, and QLQD…RAEE. Positions 1227–1252 are hinge; the sequence is RKLNTRISELQSELENAPKTGGASSE. Positions 1231–1240 are enriched in polar residues; sequence TRISELQSEL. Residues 1253–1482 form an alpha-helical tailpiece (LMM) region; sequence EVKRLEGELE…AQLQDEIDGT (230 aa). The tract at residues 1253-1509 is light meromyosin (LMM); it reads EVKRLEGELE…VRAGSARAEE (257 aa). The tract at residues 1483-1509 is nonhelical tailpiece; sequence PSSRGGSTRGASARGASVRAGSARAEE. Over residues 1484–1509 the composition is skewed to low complexity; it reads SSRGGSTRGASARGASVRAGSARAEE. Ser1489, Ser1494, and Ser1499 each carry phosphoserine.

This sequence belongs to the TRAFAC class myosin-kinesin ATPase superfamily. Myosin family. As to quaternary structure, myosin II heavy chain is two-headed. It self-assembles into filaments. Hexamer of 2 heavy chain subunits (MHC), 2 alkali light chain subunits (MLC) and 2 regulatory light chain subunits (MLC-2).

Myosin is a protein that binds to F-actin and has ATPase activity that is activated by F-actin. The sequence is that of Myosin-2 heavy chain, non muscle from Acanthamoeba castellanii (Amoeba).